A 74-amino-acid polypeptide reads, in one-letter code: Sodium channel neurotoxin MeuNaTxalpha-6 (74 aa).

An N-terminal signal peptide occupies residues 1–7 (LMTGVES). Residues 9 to 73 (RDAYIAKPHN…VPIRIPGKCH (65 aa)) form the LCN-type CS-alpha/beta domain. Intrachain disulfides connect cysteine 19/cysteine 72, cysteine 23/cysteine 45, cysteine 31/cysteine 55, and cysteine 35/cysteine 57. Residue arginine 74 is a propeptide, removed by a carboxypeptidase.

This sequence belongs to the long (4 C-C) scorpion toxin superfamily. Sodium channel inhibitor family. Alpha subfamily. Expressed by the venom gland.

The protein resides in the secreted. Its function is as follows. Alpha toxins bind voltage-independently at site-3 of sodium channels (Nav) and inhibit the inactivation of the activated channels, thereby blocking neuronal transmission. The sequence is that of Sodium channel neurotoxin MeuNaTxalpha-6 from Mesobuthus eupeus (Lesser Asian scorpion).